Reading from the N-terminus, the 409-residue chain is MEEYLNPINIFSEIGRLKKVLLHRPGEELENLTPFIMKNFLFDDIPYLEVARQEHEVFASILKNNLVEIEYIEDLVSEVLVSSVALQNKFISQFILEAEIKTDFTINLLKDYFSSLTIDNMISKMISGVVTEELKNYTSSLDDLVNGANLFIIDPMPNVLFTRDPFASIGNGVTINKMFTKVRQRETIFAEYIFKYHPVYKENVPIWLNRWEEASLEGGDELVLNKGLLVIGISERTEAKSVEKLAISLFKNKTSFDTILAFQIPKNRSYMHLDTVFTQIDYSVFTSFTSDDMYFSIYVLTYNPSSSKIHIKKEKARIKDVLSFYLGRKIDIIKCAGGDLIHGAREQWNDGANVLAIAPGEIIAYSRNHVTNKLFEENGIKVHRIPSSELSRGRGGPRCMSMPLIREDI.

Cysteine 399 (amidino-cysteine intermediate) is an active-site residue.

It belongs to the arginine deiminase family.

It localises to the cytoplasm. It carries out the reaction L-arginine + H2O = L-citrulline + NH4(+). The protein operates within amino-acid degradation; L-arginine degradation via ADI pathway; carbamoyl phosphate from L-arginine: step 1/2. The chain is Arginine deiminase from Borreliella afzelii (strain PKo) (Borrelia afzelii).